Reading from the N-terminus, the 305-residue chain is LysM and putative peptidoglycan-binding domain-containing protein 3 (305 aa).

The Extracellular portion of the chain corresponds to 1–216 (MAGRNQNRTV…PYYGADWGIG (216 aa)). Asparagine 7 and asparagine 26 each carry an N-linked (GlcNAc...) asparagine glycan. A Phosphoserine modification is found at serine 55. In terms of domain architecture, LysM spans 65 to 109 (LTKDIQEGDTLNAVALQYCCTVADIKRVNNLISDQDFFALRSIKI). Asparagine 199 is a glycosylation site (N-linked (GlcNAc...) asparagine). The chain crosses the membrane as a helical span at residues 217–237 (WWTAVVIMLIVGIITPVFYLL). The Cytoplasmic segment spans residues 238-305 (YYEILAKVDV…PQAHDAQHKT (68 aa)). The disordered stretch occupies residues 253–305 (VGSSHLHPGLTPPTQHREMENEIGPTKGIPVGQQDDHKLYRQDPQAHDAQHKT). The span at 286–305 (QDDHKLYRQDPQAHDAQHKT) shows a compositional bias: basic and acidic residues.

The protein resides in the cell membrane. It is found in the golgi apparatus. Its function is as follows. Essential for Golgi structural integrity. This chain is LysM and putative peptidoglycan-binding domain-containing protein 3 (Lysmd3), found in Mus musculus (Mouse).